Here is an 89-residue protein sequence, read N- to C-terminus: Small ribosomal subunit protein uS15 (89 aa).

The protein belongs to the universal ribosomal protein uS15 family. As to quaternary structure, part of the 30S ribosomal subunit. Forms a bridge to the 50S subunit in the 70S ribosome, contacting the 23S rRNA.

In terms of biological role, one of the primary rRNA binding proteins, it binds directly to 16S rRNA where it helps nucleate assembly of the platform of the 30S subunit by binding and bridging several RNA helices of the 16S rRNA. Its function is as follows. Forms an intersubunit bridge (bridge B4) with the 23S rRNA of the 50S subunit in the ribosome. The chain is Small ribosomal subunit protein uS15 from Frankia casuarinae (strain DSM 45818 / CECT 9043 / HFP020203 / CcI3).